Reading from the N-terminus, the 326-residue chain is D-amino-acid oxidase (326 aa).

Gly18, Val19, Thr46, Thr47, Ser48, Ala52, Ala53, Val162, and Ser179 together coordinate FAD. D-proline is bound by residues Tyr222 and Arg277. D-serine contacts are provided by Tyr222 and Arg277. The FAD site is built by Arg277, Gly303, Gly304, Gly306, and Thr308. Gly304 serves as a coordination point for D-proline. Gly304 is a D-serine binding site.

Belongs to the DAMOX/DASOX family. In terms of assembly, monomer. FAD is required as a cofactor.

Its subcellular location is the cytoplasm. The protein localises to the secreted. It is found in the cell wall. The catalysed reaction is a D-alpha-amino acid + O2 + H2O = a 2-oxocarboxylate + H2O2 + NH4(+). It carries out the reaction D-valine + O2 + H2O = 3-methyl-2-oxobutanoate + H2O2 + NH4(+). It catalyses the reaction D-leucine + O2 + H2O = 4-methyl-2-oxopentanoate + H2O2 + NH4(+). The enzyme catalyses D-isoleucine + O2 + H2O = (R)-3-methyl-2-oxopentanoate + H2O2 + NH4(+). The catalysed reaction is D-tyrosine + O2 + H2O = 3-(4-hydroxyphenyl)pyruvate + H2O2 + NH4(+). It carries out the reaction D-threonine + O2 + H2O = (S)-3-hydroxy-2-oxobutanoate + H2O2 + NH4(+). With respect to regulation, inhibited by benzoate and phenylmethylsulfonyl fluoride (PMSF). Weakly inhibited by anthranilate, crotonate, and the amino acid-modifying agents dithionitrobenzoic acid and diethyl pyrocarbonate. Not inhibited by malonate, meso-tartrate, D-malate, or the amino acid-modifying agents iodoacetic acid or butane-2,3-dione. In terms of biological role, catalyzes the oxidative deamination of D-amino acids with broad substrate specificity. The chain is D-amino-acid oxidase from Rubrobacter xylanophilus (strain DSM 9941 / JCM 11954 / NBRC 16129 / PRD-1).